The sequence spans 301 residues: ATP synthase gamma chain (301 aa).

It belongs to the ATPase gamma chain family. As to quaternary structure, F-type ATPases have 2 components, CF(1) - the catalytic core - and CF(0) - the membrane proton channel. CF(1) has five subunits: alpha(3), beta(3), gamma(1), delta(1), epsilon(1). CF(0) has three main subunits: a, b and c.

The protein resides in the cell inner membrane. In terms of biological role, produces ATP from ADP in the presence of a proton gradient across the membrane. The gamma chain is believed to be important in regulating ATPase activity and the flow of protons through the CF(0) complex. The protein is ATP synthase gamma chain of Bordetella petrii (strain ATCC BAA-461 / DSM 12804 / CCUG 43448).